A 132-amino-acid polypeptide reads, in one-letter code: Pre-histone-like nucleoprotein (132 aa).

Residues 2-23 (AILISPSNNTGWGLGTHKLFGG) constitute a propeptide that is removed on maturation. Residues 124–132 (RRKRRVRSK) carry the Nuclear localization signal motif.

The protein belongs to the adenoviridae histone-like nucleoprotein family. As to quaternary structure, interacts with the core-capsid bridging protein; this interaction bridges the virus core to the capsid. Interacts with host NPM1; this interaction might play a role in placing the pre-histone-like nucleoprotein on the viral DNA or regulating viral gene expression. Interacts with host HMGB1; this interaction inhibits host immune response. Post-translationally, cleaved near the N-terminus by the viral protease during virion maturation to form the mature protein.

The protein localises to the virion. It is found in the host nucleus. Its subcellular location is the host nucleolus. Functionally, plays a role in the inhibition of host immune response within the nucleus. Interacts with cellular nucleosomes and immobilizes the host immune danger signal HMGB1 on chromatin. In turn, prevents HMGB1 release out of the cell and thus decreases inflammation. Also plays a role in the wrapping and condensation of the viral DNA. May also promote viral genome import into the nucleus. In Canine adenovirus serotype 1 (strain CLL) (CAdV-1), this protein is Pre-histone-like nucleoprotein.